We begin with the raw amino-acid sequence, 210 residues long: Protein GrpE (210 aa).

2 disordered regions span residues 1–40 (MTDD…PDPI) and 191–210 (KGGP…EKDA). Residues 11-23 (DATAADAAADATA) are compositionally biased toward low complexity.

Belongs to the GrpE family. In terms of assembly, homodimer.

The protein resides in the cytoplasm. Its function is as follows. Participates actively in the response to hyperosmotic and heat shock by preventing the aggregation of stress-denatured proteins, in association with DnaK and GrpE. It is the nucleotide exchange factor for DnaK and may function as a thermosensor. Unfolded proteins bind initially to DnaJ; upon interaction with the DnaJ-bound protein, DnaK hydrolyzes its bound ATP, resulting in the formation of a stable complex. GrpE releases ADP from DnaK; ATP binding to DnaK triggers the release of the substrate protein, thus completing the reaction cycle. Several rounds of ATP-dependent interactions between DnaJ, DnaK and GrpE are required for fully efficient folding. In Rhizobium johnstonii (strain DSM 114642 / LMG 32736 / 3841) (Rhizobium leguminosarum bv. viciae), this protein is Protein GrpE.